The sequence spans 402 residues: tRNA pseudouridine synthase Pus10 (402 aa).

The active-site Nucleophile is the D215. Positions 370-402 (ERGGHPGARGGTRRRPRKGPARPAGGRDRPRKT) are disordered. A compositionally biased stretch (basic residues) spans 380–389 (GTRRRPRKGP).

The protein belongs to the pseudouridine synthase Pus10 family.

The enzyme catalyses uridine(54) in tRNA = pseudouridine(54) in tRNA. It carries out the reaction uridine(55) in tRNA = pseudouridine(55) in tRNA. Functionally, responsible for synthesis of pseudouridine from uracil-54 and uracil-55 in the psi GC loop of transfer RNAs. The sequence is that of tRNA pseudouridine synthase Pus10 from Cenarchaeum symbiosum (strain A).